Consider the following 284-residue polypeptide: GTP cyclohydrolase MptA (284 aa).

This sequence belongs to the GTP cyclohydrolase IV family. Homodimer. Fe(2+) is required as a cofactor.

It carries out the reaction GTP + H2O = 7,8-dihydroneopterin 2',3'-cyclic phosphate + formate + diphosphate + H(+). The protein operates within cofactor biosynthesis; 5,6,7,8-tetrahydromethanopterin biosynthesis. Its function is as follows. Converts GTP to 7,8-dihydro-D-neopterin 2',3'-cyclic phosphate, the first intermediate in the biosynthesis of coenzyme methanopterin. The sequence is that of GTP cyclohydrolase MptA from Thermoplasma volcanium (strain ATCC 51530 / DSM 4299 / JCM 9571 / NBRC 15438 / GSS1).